A 356-amino-acid chain; its full sequence is CX3C chemokine receptor 1 (356 aa).

The Extracellular portion of the chain corresponds to 1–26; sequence MTTLYSDWATESFEYDESSEACFIGD. The helical transmembrane segment at 27-47 threads the bilayer; that stretch reads IVAFGTIFLSIFYSLVFAFGL. Residues 48–68 lie on the Cytoplasmic side of the membrane; that stretch reads VGNLLVVCALTSSRKPKSITD. The helical transmembrane segment at 69–89 threads the bilayer; it reads IYLLNLALSDLLFVATLPFWT. Over 90–105 the chain is Extracellular; that stretch reads HYVISEQGFHNAVCKL. Cysteine 103 and cysteine 176 are oxidised to a cystine. The chain crosses the membrane as a helical span at residues 106–126; it reads TTALFFIGFFGGIFFITVISI. Residues 127-147 are Cytoplasmic-facing; it reads DRYMAIVLAANSINNRTVQHG. Residues 148 to 168 traverse the membrane as a helical segment; it reads VTTSLGVWAAAILVAAPQFMF. Residues 169–195 are Extracellular-facing; that stretch reads TKQKGNECLGDYPEVLQDIWPVLRNTE. Residues 196–216 form a helical membrane-spanning segment; that stretch reads ANFLGFLLPVLIMSYCYFRII. The Cytoplasmic segment spans residues 217-232; that stretch reads QTLFSCKNHKKAKAIK. The helical transmembrane segment at 233–253 threads the bilayer; sequence LILLVVIVFFLFWTPYNVMIF. The Extracellular segment spans residues 254–277; sequence LETLKLYGFFPNCDMKRDLRLALS. Residues 278 to 298 form a helical membrane-spanning segment; sequence VTETVAFSHCCLNPLIYAFAG. Topologically, residues 299–356 are cytoplasmic; that stretch reads QKFRRYLRHLSRKCQAVLCGRPVHVSFSPSESQRSRQESIVSSNFTHYTSDGDASLLL. A Phosphothreonine modification is found at threonine 347.

It belongs to the G-protein coupled receptor 1 family. As to quaternary structure, found in a ternary complex with CX3CL1 and ITGAV:ITGB3 or ITGA4:ITGB1. This protein is not N-glycosylated which is unusual for G-protein-coupled receptors.

The protein localises to the cell membrane. Its function is as follows. Receptor for the C-X3-C chemokine fractalkine (CX3CL1) present on many early leukocyte cells; CX3CR1-CX3CL1 signaling exerts distinct functions in different tissue compartments, such as immune response, inflammation, cell adhesion and chemotaxis. CX3CR1-CX3CL1 signaling mediates cell migratory functions. Responsible for the recruitment of natural killer (NK) cells to inflamed tissues. Acts as a regulator of inflammation process leading to atherogenesis by mediating macrophage and monocyte recruitment to inflamed atherosclerotic plaques, promoting cell survival. Involved in airway inflammation by promoting interleukin 2-producing T helper (Th2) cell survival in inflamed lung. Involved in the migration of circulating monocytes to non-inflamed tissues, where they differentiate into macrophages and dendritic cells. Acts as a negative regulator of angiogenesis, probably by promoting macrophage chemotaxis. Plays a key role in brain microglia by regulating inflammatory response in the central nervous system (CNS) and regulating synapse maturation. Required to restrain the microglial inflammatory response in the CNS and the resulting parenchymal damage in response to pathological stimuli. Involved in brain development by participating in synaptic pruning, a natural process during which brain microglia eliminates extra synapses during postnatal development. Synaptic pruning by microglia is required to promote the maturation of circuit connectivity during brain development. Acts as an important regulator of the gut microbiota by controlling immunity to intestinal bacteria and fungi. Expressed in lamina propria dendritic cells in the small intestine, which form transepithelial dendrites capable of taking up bacteria in order to provide defense against pathogenic bacteria. Required to initiate innate and adaptive immune responses against dissemination of commensal fungi (mycobiota) component of the gut: expressed in mononuclear phagocytes (MNPs) and acts by promoting induction of antifungal IgG antibodies response to confer protection against disseminated C.albicans or C.auris infection. Also acts as a receptor for C-C motif chemokine CCL26, inducing cell chemotaxis. In Oryctolagus cuniculus (Rabbit), this protein is CX3C chemokine receptor 1.